Reading from the N-terminus, the 138-residue chain is Ribonuclease kappa-A (138 aa).

The signal sequence occupies residues Met1 to Thr24. Over Glu25 to Trp75 the chain is Extracellular. A helical membrane pass occupies residues Gly76 to Ile96. Topologically, residues Glu97 to Ile138 are cytoplasmic.

This sequence belongs to the RNase K family.

The protein resides in the membrane. In terms of biological role, endoribonuclease. The chain is Ribonuclease kappa-A from Ceratitis capitata (Mediterranean fruit fly).